Here is a 476-residue protein sequence, read N- to C-terminus: Aspartyl/glutamyl-tRNA(Asn/Gln) amidotransferase subunit B (476 aa).

This sequence belongs to the GatB/GatE family. GatB subfamily. Heterotrimer of A, B and C subunits.

It carries out the reaction L-glutamyl-tRNA(Gln) + L-glutamine + ATP + H2O = L-glutaminyl-tRNA(Gln) + L-glutamate + ADP + phosphate + H(+). It catalyses the reaction L-aspartyl-tRNA(Asn) + L-glutamine + ATP + H2O = L-asparaginyl-tRNA(Asn) + L-glutamate + ADP + phosphate + 2 H(+). Its function is as follows. Allows the formation of correctly charged Asn-tRNA(Asn) or Gln-tRNA(Gln) through the transamidation of misacylated Asp-tRNA(Asn) or Glu-tRNA(Gln) in organisms which lack either or both of asparaginyl-tRNA or glutaminyl-tRNA synthetases. The reaction takes place in the presence of glutamine and ATP through an activated phospho-Asp-tRNA(Asn) or phospho-Glu-tRNA(Gln). The protein is Aspartyl/glutamyl-tRNA(Asn/Gln) amidotransferase subunit B of Oceanobacillus iheyensis (strain DSM 14371 / CIP 107618 / JCM 11309 / KCTC 3954 / HTE831).